Consider the following 293-residue polypeptide: ATP phosphoribosyltransferase (293 aa).

The protein belongs to the ATP phosphoribosyltransferase family. Long subfamily. Requires Mg(2+) as cofactor.

It localises to the cytoplasm. It carries out the reaction 1-(5-phospho-beta-D-ribosyl)-ATP + diphosphate = 5-phospho-alpha-D-ribose 1-diphosphate + ATP. Its pathway is amino-acid biosynthesis; L-histidine biosynthesis; L-histidine from 5-phospho-alpha-D-ribose 1-diphosphate: step 1/9. With respect to regulation, feedback inhibited by histidine. Functionally, catalyzes the condensation of ATP and 5-phosphoribose 1-diphosphate to form N'-(5'-phosphoribosyl)-ATP (PR-ATP). Has a crucial role in the pathway because the rate of histidine biosynthesis seems to be controlled primarily by regulation of HisG enzymatic activity. The polypeptide is ATP phosphoribosyltransferase (Nitratidesulfovibrio vulgaris (strain DSM 19637 / Miyazaki F) (Desulfovibrio vulgaris)).